Consider the following 315-residue polypeptide: 1-aminocyclopropane-1-carboxylate oxidase 1 (315 aa).

The 101-residue stretch at 153–253 (PNFGTKVSNY…RMSLASFYNP (101 aa)) folds into the Fe2OG dioxygenase domain. Residues His-177, Asp-179, and His-234 each coordinate Fe cation.

This sequence belongs to the iron/ascorbate-dependent oxidoreductase family. Fe cation serves as cofactor. As to expression, predominantly expressed in the petals and the stigma and style.

It carries out the reaction 1-aminocyclopropane-1-carboxylate + L-ascorbate + O2 = ethene + L-dehydroascorbate + hydrogen cyanide + CO2 + 2 H2O. It functions in the pathway alkene biosynthesis; ethylene biosynthesis via S-adenosyl-L-methionine; ethylene from S-adenosyl-L-methionine: step 2/2. The protein is 1-aminocyclopropane-1-carboxylate oxidase 1 (ACO1) of Solanum lycopersicum (Tomato).